Reading from the N-terminus, the 863-residue chain is Envelope glycoprotein gp160 (863 aa).

A signal peptide spans 1 to 32; it reads MIVTMKAMEKRNKKLWTLYLAMALITPCLSLR. Over 33–684 the chain is Extracellular; that stretch reads QLYATVYAGV…ITKWLWYIKI (652 aa). A disulfide bridge links Cys-54 with Cys-74. N-linked (GlcNAc...) asparagine; by host glycosylation is found at Asn-59 and Asn-88. Cystine bridges form between Cys-119/Cys-201, Cys-126/Cys-192, Cys-131/Cys-146, Cys-214/Cys-243, and Cys-224/Cys-235. The tract at residues 131–145 is V1; the sequence is CTNIAGTTNENLMKK. The interval 146–192 is V2; it reads CEFNVTTVIKDKKEKKQALFYVSDLMELNETSSTNKTNSKMYTLTNC. N-linked (GlcNAc...) asparagine; by host glycans are attached at residues Asn-149, Asn-174, Asn-180, Asn-193, Asn-225, Asn-230, Asn-237, Asn-258, Asn-285, Asn-289, Asn-320, Asn-330, Asn-350, Asn-356, and Asn-360. Residues 292-326 form a V3 region; that stretch reads CERPQIDIQEMRIGPMAWYSMGIGGTAGNSSRAAY. Residues Cys-292 and Cys-327 are joined by a disulfide bond. A CD4-binding loop region spans residues 362 to 372; that stretch reads SSGGDLEVTHL. 2 cysteine pairs are disulfide-bonded: Cys-376/Cys-442 and Cys-383/Cys-415. The interval 383–415 is V4; sequence CNTAKMFNYTFSCNGTTCSVSNVSQGNNGTLPC. Residues Asn-390, Asn-396, Asn-404, Asn-410, Asn-439, Asn-445, Asn-458, and Asn-463 are each glycosylated (N-linked (GlcNAc...) asparagine; by host). V5 stretches follow at residues 458-469 and 460-469; these read NSSNNNVTFRPI and SNNNVTFRPI. The tract at residues 514-534 is fusion peptide; sequence AVGLGMLFLGVLSAAGSTMGA. Positions 576–594 are immunosuppression; it reads RQLRARLLALETLLQNQQL. Cys-600 and Cys-606 are joined by a disulfide. N-linked (GlcNAc...) asparagine; by host glycosylation is found at Asn-613, Asn-619, and Asn-637. Residues 633–667 adopt a coiled-coil conformation; sequence RQISNISSTIYEEIQKAQVQQEQNEKKLLELDEWA. Residues 662–683 form an MPER; binding to GalCer region; that stretch reads ELDEWASIWNWLDITKWLWYIK. Residues 685-705 traverse the membrane as a helical segment; it reads AIIIVGALVGVRVIMIVLNIV. Topologically, residues 706–863 are cytoplasmic; the sequence is KNIRQGYQPL…IRQGLERSLL (158 aa). Residues 712–715 carry the YXXL motif; contains endocytosis signal motif; it reads YQPL. The short motif at 862–863 is the Di-leucine internalization motif element; it reads LL.

It belongs to the HIV-1 env protein family. As to quaternary structure, the mature envelope protein (Env) consists of a homotrimer of non-covalently associated gp120-gp41 heterodimers. The resulting complex protrudes from the virus surface as a spike. There seems to be as few as 10 spikes on the average virion. Interacts with host CD4, CCR5 and CXCR4. Gp120 also interacts with the C-type lectins CD209/DC-SIGN and CLEC4M/DC-SIGNR (collectively referred to as DC-SIGN(R)). Gp120 and gp41 interact with GalCer. Gp120 interacts with host ITGA4/ITGB7 complex; on CD4+ T-cells, this interaction results in rapid activation of integrin ITGAL/LFA-1, which facilitates efficient cell-to-cell spreading of HIV-1. Gp120 interacts with cell-associated heparan sulfate; this interaction increases virus infectivity on permissive cells and may be involved in infection of CD4- cells. In terms of assembly, the mature envelope protein (Env) consists of a homotrimer of non-covalently associated gp120-gp41 heterodimers. The resulting complex protrudes from the virus surface as a spike. There seems to be as few as 10 spikes on the average virion. Highly glycosylated by host. The high number of glycan on the protein is reffered to as 'glycan shield' because it contributes to hide protein sequence from adaptive immune system. Post-translationally, palmitoylation of the transmembrane protein and of Env polyprotein (prior to its proteolytic cleavage) is essential for their association with host cell membrane lipid rafts. Palmitoylation is therefore required for envelope trafficking to classical lipid rafts, but not for viral replication. In terms of processing, specific enzymatic cleavages in vivo yield mature proteins. Envelope glycoproteins are synthesized as an inactive precursor that is heavily N-glycosylated and processed likely by host cell furin in the Golgi to yield the mature SU and TM proteins. The cleavage site between SU and TM requires the minimal sequence [KR]-X-[KR]-R. About 2 of the 9 disulfide bonds of gp41 are reduced by P4HB/PDI, following binding to CD4 receptor.

It localises to the virion membrane. The protein localises to the host cell membrane. It is found in the host endosome membrane. In terms of biological role, oligomerizes in the host endoplasmic reticulum into predominantly trimers. In a second time, gp160 transits in the host Golgi, where glycosylation is completed. The precursor is then proteolytically cleaved in the trans-Golgi and thereby activated by cellular furin or furin-like proteases to produce gp120 and gp41. Attaches the virus to the host lymphoid cell by binding to the primary receptor CD4. This interaction induces a structural rearrangement creating a high affinity binding site for a chemokine coreceptor like CXCR4 and/or CCR5. Acts as a ligand for CD209/DC-SIGN and CLEC4M/DC-SIGNR, which are respectively found on dendritic cells (DCs), and on endothelial cells of liver sinusoids and lymph node sinuses. These interactions allow capture of viral particles at mucosal surfaces by these cells and subsequent transmission to permissive cells. HIV subverts the migration properties of dendritic cells to gain access to CD4+ T-cells in lymph nodes. Virus transmission to permissive T-cells occurs either in trans (without DCs infection, through viral capture and transmission), or in cis (following DCs productive infection, through the usual CD4-gp120 interaction), thereby inducing a robust infection. In trans infection, bound virions remain infectious over days and it is proposed that they are not degraded, but protected in non-lysosomal acidic organelles within the DCs close to the cell membrane thus contributing to the viral infectious potential during DCs' migration from the periphery to the lymphoid tissues. On arrival at lymphoid tissues, intact virions recycle back to DCs' cell surface allowing virus transmission to CD4+ T-cells. Functionally, acts as a class I viral fusion protein. Under the current model, the protein has at least 3 conformational states: pre-fusion native state, pre-hairpin intermediate state, and post-fusion hairpin state. During fusion of viral and target intracellular membranes, the coiled coil regions (heptad repeats) assume a trimer-of-hairpins structure, positioning the fusion peptide in close proximity to the C-terminal region of the ectodomain. The formation of this structure appears to drive apposition and subsequent fusion of viral and target cell membranes. Complete fusion occurs in host cell endosomes and is dynamin-dependent, however some lipid transfer might occur at the plasma membrane. The virus undergoes clathrin-dependent internalization long before endosomal fusion, thus minimizing the surface exposure of conserved viral epitopes during fusion and reducing the efficacy of inhibitors targeting these epitopes. Membranes fusion leads to delivery of the nucleocapsid into the cytoplasm. The polypeptide is Envelope glycoprotein gp160 (Human immunodeficiency virus type 1 group O (isolate ANT70) (HIV-1)).